Reading from the N-terminus, the 1446-residue chain is ABC-type transporter oblD (1446 aa).

Residues N9, N28, N222, N281, and N305 are each glycosylated (N-linked (GlcNAc...) asparagine). Positions 104-357 constitute an ABC transporter 1 domain; it reads LEVLSLVSKA…FLDMGFVCPD (254 aa). A run of 6 helical transmembrane segments spans residues 468 to 488, 502 to 522, 548 to 568, 577 to 597, 610 to 630, and 719 to 739; these read VTIS…SIFY, ALLF…MLTL, MIMD…VLYF, GAFF…SMFF, ALPF…FTIP, and IGVI…ATDF. One can recognise an ABC transporter 2 domain in the interval 796–1038; the sequence is FQWKDVCFDI…ILIDYFVRNG (243 aa). 832–839 contributes to the ATP binding site; it reads GVSGAGKT. 5 helical membrane-spanning segments follow: residues 1147-1167, 1177-1197, 1217-1237, 1265-1285, and 1301-1321; these read ALCV…PNTI, IFML…HFVA, FIIS…VLMF, LMVW…IAAF, and LCLI…FWIF. N-linked (GlcNAc...) asparagine glycosylation is found at N1344 and N1359. Residues 1412–1432 form a helical membrane-spanning segment; sequence FGLMWVFIVFNIFAACLLYWW.

This sequence belongs to the ABC transporter superfamily. ABCG family. PDR (TC 3.A.1.205) subfamily.

Its subcellular location is the cell membrane. ABC-type transporter; part of the gene cluster that mediates the biosynthesis of the sesterterpenes ophiobolins, fungal phytotoxins with potential anti-cancer activities. Acts as a specific transporter involved in ophiobolins secretion. This Aspergillus clavatus (strain ATCC 1007 / CBS 513.65 / DSM 816 / NCTC 3887 / NRRL 1 / QM 1276 / 107) protein is ABC-type transporter oblD.